The chain runs to 245 residues: Orotidine 5'-phosphate decarboxylase (245 aa).

Residues Asp-22, Lys-44, Asp-71–Thr-80, Thr-131, Arg-192, Gln-201, Gly-221, and Arg-222 each bind substrate. The active-site Proton donor is the Lys-73.

The protein belongs to the OMP decarboxylase family. Type 1 subfamily. In terms of assembly, homodimer.

It carries out the reaction orotidine 5'-phosphate + H(+) = UMP + CO2. The protein operates within pyrimidine metabolism; UMP biosynthesis via de novo pathway; UMP from orotate: step 2/2. Functionally, catalyzes the decarboxylation of orotidine 5'-monophosphate (OMP) to uridine 5'-monophosphate (UMP). The chain is Orotidine 5'-phosphate decarboxylase from Shigella dysenteriae serotype 1 (strain Sd197).